The primary structure comprises 325 residues: Mitochondrial amidoxime-reducing component 1 (325 aa).

Residues 1-16 are Mitochondrial matrix-facing; it reads MDLKEAFATIFDQNRK. The helical; Signal-anchor for type II membrane protein transmembrane segment at 17–36 threads the bilayer; sequence VALYAAGTTVAVLGLGLVFK. The Cytoplasmic segment spans residues 37–325; sequence YMRREEKLTR…VGEPVYKITY (289 aa). Mo-molybdopterin is bound by residues K59, S60, and R84. The tract at residues 85–175 is MOSC N-terminal region; it reads HWLVITEDGH…ADKPVRLVHY (91 aa). The MOSC domain occupies 179-323; it reads LKPQRPHEKE…LHVGEPVYKI (145 aa). Mo-molybdopterin contacts are provided by R230, R264, C265, and Y305.

The cofactor is Mo-molybdopterin.

It is found in the mitochondrion outer membrane. The protein resides in the membrane. It carries out the reaction N(omega)-hydroxy-L-arginine + 2 Fe(II)-[cytochrome b5] + 2 H(+) = L-arginine + 2 Fe(III)-[cytochrome b5] + H2O. Functionally, catalyzes the reduction of N-oxygenated molecules, acting as a counterpart of cytochrome P450 and flavin-containing monooxygenases in metabolic cycles. As a component of prodrug-converting system, reduces a multitude of N-hydroxylated prodrugs particularly amidoximes, leading to increased drug bioavailability. May be involved in mitochondrial N(omega)-hydroxy-L-arginine (NOHA) reduction, regulating endogenous nitric oxide levels and biosynthesis. Postulated to cleave the N-OH bond of N-hydroxylated substrates in concert with electron transfer from NADH to cytochrome b5 reductase then to cytochrome b5, the ultimate electron donor that primes the active site for substrate reduction. The polypeptide is Mitochondrial amidoxime-reducing component 1 (mtarc1) (Danio rerio (Zebrafish)).